Reading from the N-terminus, the 98-residue chain is Ubiquitin-related modifier 1 (98 aa).

Position 98 is a 1-thioglycine (G98). A Glycyl lysine isopeptide (Gly-Lys) (interchain with K-? in acceptor proteins) cross-link involves residue G98.

It belongs to the URM1 family. C-terminal thiocarboxylation occurs in 2 steps, it is first acyl-adenylated (-COAMP) via the hesA/moeB/thiF part of UBA4, then thiocarboxylated (-COSH) via the rhodanese domain of UBA4.

Its subcellular location is the cytoplasm. It functions in the pathway tRNA modification; 5-methoxycarbonylmethyl-2-thiouridine-tRNA biosynthesis. Acts as a sulfur carrier required for 2-thiolation of mcm(5)S(2)U at tRNA wobble positions of cytosolic tRNA(Lys), tRNA(Glu) and tRNA(Gln). Serves as sulfur donor in tRNA 2-thiolation reaction by being thiocarboxylated (-COSH) at its C-terminus by the MOCS3 homolog UBA4. The sulfur is then transferred to tRNA to form 2-thiolation of mcm(5)S(2)U. Prior mcm(5) tRNA modification by the elongator complex is required for 2-thiolation. Also acts as a ubiquitin-like protein (UBL) that is covalently conjugated via an isopeptide bond to lysine residues of target proteins such as AHP1. The thiocarboxylated form serves as substrate for conjugation and oxidative stress specifically induces the formation of UBL-protein conjugates. The polypeptide is Ubiquitin-related modifier 1 (Candida glabrata (strain ATCC 2001 / BCRC 20586 / JCM 3761 / NBRC 0622 / NRRL Y-65 / CBS 138) (Yeast)).